We begin with the raw amino-acid sequence, 275 residues long: TATA-box-binding protein (275 aa).

Disordered regions lie at residues 23–45 (EDES…FGMN) and 73–92 (GSMS…HTPA). Tandem repeats lie at residues 103 to 179 (LENI…ARIV) and 193 to 270 (IQNM…YPIL).

This sequence belongs to the TBP family. In terms of assembly, belongs to the TFIID complex together with the TBP-associated factors (TAFs). Binds DNA as monomer.

The protein resides in the nucleus. Functionally, general transcription factor that functions at the core of the DNA-binding multiprotein factor TFIID. Binding of TFIID to the TATA box is the initial transcriptional step of the pre-initiation complex (PIC), playing a role in the activation of eukaryotic genes transcribed by RNA polymerase II. The sequence is that of TATA-box-binding protein from Artemia franciscana (Brine shrimp).